Reading from the N-terminus, the 287-residue chain is Homoserine kinase (287 aa).

79–89 (PLARGLGSSSS) is a binding site for ATP.

It belongs to the GHMP kinase family. Homoserine kinase subfamily.

Its subcellular location is the cytoplasm. The enzyme catalyses L-homoserine + ATP = O-phospho-L-homoserine + ADP + H(+). It participates in amino-acid biosynthesis; L-threonine biosynthesis; L-threonine from L-aspartate: step 4/5. Catalyzes the ATP-dependent phosphorylation of L-homoserine to L-homoserine phosphate. The polypeptide is Homoserine kinase (Enterococcus faecalis (strain ATCC 700802 / V583)).